A 4010-amino-acid polypeptide reads, in one-letter code: Extracellular matrix organizing protein FRAS1 (4010 aa).

An N-terminal signal peptide occupies residues Met-1–Gly-25. 5 consecutive VWFC domains span residues Ala-26–Ala-87, Gly-92–Val-152, Lys-156–Ser-216, Arg-218–Ala-278, and Arg-282–Ile-342. Residues Ala-26 to Ser-3903 lie on the Extracellular side of the membrane. Ser-343 is subject to Phosphoserine. The region spanning Ser-358–Thr-416 is the VWFC 6 domain. FU repeat units follow at residues Lys-408–Gln-459, Gly-461–Gln-504, His-506–Asn-552, Gln-554–Ala-598, Thr-601–Pro-646, His-648–Leu-704, Thr-707–Asn-752, Glu-754–Leu-799, Val-802–Lys-851, Arg-853–Leu-899, Asn-902–Leu-947, Thr-951–Arg-996, Ser-998–Ala-1041, and Lys-1045–Gly-1088. An N-linked (GlcNAc...) asparagine glycan is attached at Asn-727. Asn-1094 and Asn-1107 each carry an N-linked (GlcNAc...) asparagine glycan. CSPG repeat units lie at residues Thr-1101–Ser-1196, Ala-1216–Asn-1307, Ala-1328–Ser-1440, Ala-1465–Ala-1561, Pro-1597–Thr-1691, Gly-1712–Ser-1812, and Pro-1834–Ser-1938. Asn-1506 carries N-linked (GlcNAc...) asparagine glycosylation. The N-linked (GlcNAc...) asparagine glycan is linked to Asn-1779. Residues Asn-1950 and Asn-1980 are each glycosylated (N-linked (GlcNAc...) asparagine). CSPG repeat units follow at residues Glu-1959–Thr-2059, Ile-2080–Val-2179, Pro-2201–Ser-2293, Ala-2313–Ser-2406, and Thr-2441–Lys-2538. 5 consecutive Calx-beta domains span residues Val-2545–Ser-2648, Ala-2661–Ala-2772, Ala-2786–Ser-2892, Ile-2907–Gly-3009, and Ala-3027–Gly-3131. Residues Asn-2565, Asn-2666, and Asn-2684 are each glycosylated (N-linked (GlcNAc...) asparagine). Residues Asn-2910, Asn-2987, Asn-3072, Asn-3220, Asn-3678, and Asn-3877 are each glycosylated (N-linked (GlcNAc...) asparagine). Residues Ile-3904–Val-3924 traverse the membrane as a helical segment. Residues Thr-3925–Val-4010 are Cytoplasmic-facing.

Belongs to the FRAS1 family.

It is found in the cell membrane. Its function is as follows. Involved in extracellular matrix organization. Required for the regulation of epidermal-basement membrane adhesion responsible for proper organogenesis during embryonic development. Involved in brain organization and function. This chain is Extracellular matrix organizing protein FRAS1, found in Mus musculus (Mouse).